Reading from the N-terminus, the 255-residue chain is Pyridoxine 5'-phosphate synthase (255 aa).

3-amino-2-oxopropyl phosphate contacts are provided by N8 and R19. The Proton acceptor role is filled by H44. 1-deoxy-D-xylulose 5-phosphate contacts are provided by R46 and H51. E74 acts as the Proton acceptor in catalysis. T111 is a binding site for 1-deoxy-D-xylulose 5-phosphate. Residue H202 is the Proton donor of the active site. 3-amino-2-oxopropyl phosphate is bound by residues D203 and 225–226; that span reads GH.

It belongs to the PNP synthase family. In terms of assembly, homooctamer; tetramer of dimers.

It is found in the cytoplasm. It catalyses the reaction 3-amino-2-oxopropyl phosphate + 1-deoxy-D-xylulose 5-phosphate = pyridoxine 5'-phosphate + phosphate + 2 H2O + H(+). The protein operates within cofactor biosynthesis; pyridoxine 5'-phosphate biosynthesis; pyridoxine 5'-phosphate from D-erythrose 4-phosphate: step 5/5. Catalyzes the complicated ring closure reaction between the two acyclic compounds 1-deoxy-D-xylulose-5-phosphate (DXP) and 3-amino-2-oxopropyl phosphate (1-amino-acetone-3-phosphate or AAP) to form pyridoxine 5'-phosphate (PNP) and inorganic phosphate. In Xanthomonas oryzae pv. oryzae (strain MAFF 311018), this protein is Pyridoxine 5'-phosphate synthase.